The chain runs to 530 residues: Hyccin 2 (530 aa).

Threonine 30 and threonine 306 each carry phosphothreonine. Residues serine 321 and serine 341 each carry the phosphoserine modification. The disordered stretch occupies residues 328–410 (RREGAEGVNG…DSVVRKQYVQ (83 aa)). A compositionally biased stretch (polar residues) spans 353–373 (SGASLSSQPIGTKPSSSSQRG). A phosphoserine mark is found at serine 430, serine 442, serine 444, and serine 491. Positions 498-530 (GQAGEGKELLSPGAPLTKQSRSPSFNMQLISQV) are disordered. Residues 514-530 (TKQSRSPSFNMQLISQV) show a composition bias toward polar residues.

Belongs to the Hyccin family. As to quaternary structure, component of a phosphatidylinositol 4-kinase (PI4K) complex, composed of PI4KA, EFR3 (EFR3A or EFR3B), TTC7 (TTC7A or TTC7B) and HYCC (HYCC1 or HYCC2).

Its subcellular location is the cytoplasm. It is found in the cytosol. The protein resides in the cell membrane. Functionally, component of a complex required to localize phosphatidylinositol 4-kinase (PI4K) to the plasma membrane. The polypeptide is Hyccin 2 (HYCC2) (Pongo abelii (Sumatran orangutan)).